We begin with the raw amino-acid sequence, 113 residues long: Photosystem II reaction center Psb28 protein (113 aa).

It belongs to the Psb28 family. As to quaternary structure, part of the photosystem II complex.

Its subcellular location is the cellular thylakoid membrane. This chain is Photosystem II reaction center Psb28 protein, found in Prochlorococcus marinus (strain NATL1A).